The sequence spans 338 residues: tRNA N6-adenosine threonylcarbamoyltransferase (338 aa).

Fe cation is bound by residues His-111 and His-115. Substrate-binding positions include 134–138 (LVSGG), Asp-167, Gly-180, and Asn-272. Asp-300 serves as a coordination point for Fe cation.

It belongs to the KAE1 / TsaD family. Requires Fe(2+) as cofactor.

It is found in the cytoplasm. The enzyme catalyses L-threonylcarbamoyladenylate + adenosine(37) in tRNA = N(6)-L-threonylcarbamoyladenosine(37) in tRNA + AMP + H(+). Its function is as follows. Required for the formation of a threonylcarbamoyl group on adenosine at position 37 (t(6)A37) in tRNAs that read codons beginning with adenine. Is involved in the transfer of the threonylcarbamoyl moiety of threonylcarbamoyl-AMP (TC-AMP) to the N6 group of A37, together with TsaE and TsaB. TsaD likely plays a direct catalytic role in this reaction. The sequence is that of tRNA N6-adenosine threonylcarbamoyltransferase from Shewanella sp. (strain ANA-3).